A 352-amino-acid chain; its full sequence is Thiamine-monophosphate kinase (352 aa).

Positions 58, 73, and 75 each coordinate Mg(2+). Residue His82 coordinates substrate. Asp103 and Asp151 together coordinate Mg(2+). Residues 150 to 151 (GD) and Arg177 contribute to the ATP site. Asp239 serves as a coordination point for Mg(2+). Ser241 lines the ATP pocket. Residue Asp242 coordinates Mg(2+). Substrate-binding residues include Asp294 and Trp349.

Belongs to the thiamine-monophosphate kinase family.

The enzyme catalyses thiamine phosphate + ATP = thiamine diphosphate + ADP. The protein operates within cofactor biosynthesis; thiamine diphosphate biosynthesis; thiamine diphosphate from thiamine phosphate: step 1/1. Catalyzes the ATP-dependent phosphorylation of thiamine-monophosphate (TMP) to form thiamine-pyrophosphate (TPP), the active form of vitamin B1. This chain is Thiamine-monophosphate kinase, found in Caulobacter vibrioides (strain ATCC 19089 / CIP 103742 / CB 15) (Caulobacter crescentus).